The following is a 485-amino-acid chain: WD repeat-containing protein 13 (485 aa).

M1 carries the N-acetylmethionine modification. S70, S74, and S79 each carry phosphoserine. R114 is subject to Asymmetric dimethylarginine; alternate. R114 carries the omega-N-methylarginine; alternate modification. WD repeat units follow at residues G162–L202, T208–S246, R250–I290, K295–M335, T341–N389, Q394–V438, and A444–R482.

Widely expressed.

It localises to the nucleus. The sequence is that of WD repeat-containing protein 13 (WDR13) from Homo sapiens (Human).